The chain runs to 531 residues: 2-isopropylmalate synthase (531 aa).

One can recognise a Pyruvate carboxyltransferase domain in the interval 8 to 284; the sequence is IIIFDTTLRD…LTNIDTKQIY (277 aa). Mn(2+)-binding residues include Asp17, His208, His210, and Asn244. The segment at 408–531 is regulatory domain; it reads RVELVQVSCG…TQDKQTEVTA (124 aa).

This sequence belongs to the alpha-IPM synthase/homocitrate synthase family. LeuA type 1 subfamily. Homodimer. Mn(2+) serves as cofactor.

The protein resides in the cytoplasm. It catalyses the reaction 3-methyl-2-oxobutanoate + acetyl-CoA + H2O = (2S)-2-isopropylmalate + CoA + H(+). Its pathway is amino-acid biosynthesis; L-leucine biosynthesis; L-leucine from 3-methyl-2-oxobutanoate: step 1/4. Catalyzes the condensation of the acetyl group of acetyl-CoA with 3-methyl-2-oxobutanoate (2-ketoisovalerate) to form 3-carboxy-3-hydroxy-4-methylpentanoate (2-isopropylmalate). This chain is 2-isopropylmalate synthase, found in Trichormus variabilis (strain ATCC 29413 / PCC 7937) (Anabaena variabilis).